The sequence spans 351 residues: Probable dual-specificity RNA methyltransferase RlmN (351 aa).

Residue Glu102 is the Proton acceptor of the active site. A Radical SAM core domain is found at 110–339 (DGGRKTICIS…ILNRRSPGKD (230 aa)). A disulfide bond links Cys117 and Cys344. The [4Fe-4S] cluster site is built by Cys124, Cys128, and Cys131. S-adenosyl-L-methionine is bound by residues 171–172 (GE), Ser203, 226–228 (SLN), and Asn302. Catalysis depends on Cys344, which acts as the S-methylcysteine intermediate.

It belongs to the radical SAM superfamily. RlmN family. It depends on [4Fe-4S] cluster as a cofactor.

The protein localises to the cytoplasm. It catalyses the reaction adenosine(2503) in 23S rRNA + 2 reduced [2Fe-2S]-[ferredoxin] + 2 S-adenosyl-L-methionine = 2-methyladenosine(2503) in 23S rRNA + 5'-deoxyadenosine + L-methionine + 2 oxidized [2Fe-2S]-[ferredoxin] + S-adenosyl-L-homocysteine. The enzyme catalyses adenosine(37) in tRNA + 2 reduced [2Fe-2S]-[ferredoxin] + 2 S-adenosyl-L-methionine = 2-methyladenosine(37) in tRNA + 5'-deoxyadenosine + L-methionine + 2 oxidized [2Fe-2S]-[ferredoxin] + S-adenosyl-L-homocysteine. In terms of biological role, specifically methylates position 2 of adenine 2503 in 23S rRNA and position 2 of adenine 37 in tRNAs. The sequence is that of Probable dual-specificity RNA methyltransferase RlmN from Leptospira borgpetersenii serovar Hardjo-bovis (strain JB197).